The following is a 439-amino-acid chain: MPDFGANDLDAFWMPFTPNRRFKRHPRMLSSASGMWYRTPESREVLDATSGLWCVNAGHDRPKIREAIQKQAAEMDYAPCFNMGHPLAFQFASRLAQITPKGLDRIFFTNSGSESVDTALKIALAYHRARGKGTKTRLIGRERGYHGVGFGGISVGGIPKNRMYFGSLLTGVDHLPHTHGLPGNTCAKGQPENGAHLADDLERIVALHDASNIAAVIVEPVAGSTGVLIPPKGYLERLRAICDKHDILLIFDEVITGFGRVGAPFAAERFGVTPDLICMAKGLTNAAVPCGAVAASGKIYDAMMDGADAPIELFHGYTYSAHPLACAAGLATLETYREDDLFARAAGLEGYWQDAMHSLADARHVVDVRNLGLVAGIELEPRPGAPTARAMEVFETCFDEGLLIRVTGDIIALSPPLILEKDHIDRMVETIRRVLGQVD.

Residue 112-113 (GS) coordinates pyridoxal 5'-phosphate. Position 281 is an N6-(pyridoxal phosphate)lysine (Lys281). Residue Thr318 participates in pyridoxal 5'-phosphate binding.

The protein belongs to the class-III pyridoxal-phosphate-dependent aminotransferase family. In terms of assembly, homotetramer. The cofactor is pyridoxal 5'-phosphate.

The catalysed reaction is 3-oxopropanoate + L-alanine = beta-alanine + pyruvate. The enzyme catalyses 3-aminobutanoate + pyruvate = acetoacetate + L-alanine. It carries out the reaction benzylamine + pyruvate = benzaldehyde + L-alanine. It catalyses the reaction (S)-1-phenylethylamine + pyruvate = acetophenone + L-alanine. The catalysed reaction is 2-phenylethylamine + pyruvate = 2-phenylacetaldehyde + L-alanine. The enzyme catalyses 1-phenylpropylamine + pyruvate = 1-phenylpropan-1-one + L-alanine. It carries out the reaction 3-phenylpropylamine + pyruvate = 3-phenylpropanal + L-alanine. Aminotransferase that can use beta-amino acids, aliphatic amines, or aromatic amines as amino donors, and pyruvate as amino acceptor. Shows high activity for short-chain beta-amino acids, with the highest activity for 3-aminobutanoate and beta-alanine in vitro. Displays higher activity toward aromatic amines than aliphatic amines. May be involved in beta-alanine biosynthesis and/or degradation. The sequence is that of Omega-aminotransferase from Caulobacter vibrioides (strain ATCC 19089 / CIP 103742 / CB 15) (Caulobacter crescentus).